The sequence spans 27 residues: Phospholipase A2 taicatoxin (27 aa).

This sequence belongs to the phospholipase A2 family. Group I subfamily. As to quaternary structure, heterotrimer composed of an alpha-neurotoxin-like peptide of 8 kDa (AC P0CJ35), this neurotoxic phospholipase of 16 kDa and a serine protease inhibitor of 7 kDa (AC B7S4N9) at an approximate stoichiometry of 1:1:4; non-covalently linked. Ca(2+) serves as cofactor. Post-translationally, contains 7 disulfide bonds. In terms of tissue distribution, expressed by the venom gland.

It localises to the secreted. It carries out the reaction a 1,2-diacyl-sn-glycero-3-phosphocholine + H2O = a 1-acyl-sn-glycero-3-phosphocholine + a fatty acid + H(+). Functionally, heterotrimer: blocks the voltage-dependent L-type calcium channels from the heart, and the small conductance calcium-activated potassium channels in the chromaffin cells and in the brain. Is very toxic to mice. Its function is as follows. Monomer: Snake venom phospholipase A2 (PLA2) that has neurotoxic activities. Voltage-dependently affects ionic currents in chick (Gallus domesticus) dorsal root ganglion cells. PLA2 catalyzes the calcium-dependent hydrolysis of the 2-acyl groups in 3-sn-phosphoglycerides. The polypeptide is Phospholipase A2 taicatoxin (Oxyuranus scutellatus scutellatus (Australian taipan)).